A 127-amino-acid chain; its full sequence is Large ribosomal subunit protein uL22 (127 aa).

This sequence belongs to the universal ribosomal protein uL22 family. As to quaternary structure, part of the 50S ribosomal subunit.

This protein binds specifically to 23S rRNA; its binding is stimulated by other ribosomal proteins, e.g. L4, L17, and L20. It is important during the early stages of 50S assembly. It makes multiple contacts with different domains of the 23S rRNA in the assembled 50S subunit and ribosome. Its function is as follows. The globular domain of the protein is located near the polypeptide exit tunnel on the outside of the subunit, while an extended beta-hairpin is found that lines the wall of the exit tunnel in the center of the 70S ribosome. This is Large ribosomal subunit protein uL22 from Methylorubrum populi (strain ATCC BAA-705 / NCIMB 13946 / BJ001) (Methylobacterium populi).